A 466-amino-acid polypeptide reads, in one-letter code: Myocardial zonula adherens protein (466 aa).

Residues 1–10 (MLRSTSTVTL) show a composition bias toward polar residues. Residues 1 to 16 (MLRSTSTVTLFSGGGA) form the signal peptide. The disordered stretch occupies residues 1–68 (MLRSTSTVTL…SNGESTKRLP (68 aa)). Basic and acidic residues predominate over residues 45–55 (TEKKIERKDQP). Coiled coils occupy residues 95 to 137 (NQLK…QDLS) and 187 to 415 (HIKD…LTET).

Belongs to the MYZAP family. Interacts with DSP, MPRIP and TJP1/ZO1. Interaction with MPRIP inhibits the activation of transcription factor SRF. Interacts with GRIN1. Interacts with DYNLL1. Detected in heart myocardium and lung.

The protein resides in the cytoplasm. The protein localises to the cytoskeleton. It is found in the cell membrane. It localises to the myofibril. Its subcellular location is the sarcomere. The protein resides in the i band. The protein localises to the z line. It is found in the cell junction. Plays a role in cellular signaling via Rho-related GTP-binding proteins and activation of transcription factor SRF. Targets TJP1 to cell junctions. In cortical neurons, may play a role in glutaminergic signal transduction through interaction with the NMDA receptor subunit GRIN1. This Mus musculus (Mouse) protein is Myocardial zonula adherens protein (Myzap).